Here is a 212-residue protein sequence, read N- to C-terminus: Phosphoribosylglycinamide formyltransferase (212 aa).

11–13 (GSN) is a N(1)-(5-phospho-beta-D-ribosyl)glycinamide binding site. Residues Arg-64, 89–92 (MRIL), and Asn-106 contribute to the (6R)-10-formyltetrahydrofolate site. The Proton donor role is filled by His-108. Residue 140 to 144 (TDELD) participates in (6R)-10-formyltetrahydrofolate binding. 170 to 173 (QTQE) is a binding site for N(1)-(5-phospho-beta-D-ribosyl)glycinamide.

The protein belongs to the GART family. As to quaternary structure, monomer. Homodimer below pH 6.8.

The catalysed reaction is N(1)-(5-phospho-beta-D-ribosyl)glycinamide + (6R)-10-formyltetrahydrofolate = N(2)-formyl-N(1)-(5-phospho-beta-D-ribosyl)glycinamide + (6S)-5,6,7,8-tetrahydrofolate + H(+). It participates in purine metabolism; IMP biosynthesis via de novo pathway; N(2)-formyl-N(1)-(5-phospho-D-ribosyl)glycinamide from N(1)-(5-phospho-D-ribosyl)glycinamide (10-formyl THF route): step 1/1. With respect to regulation, inhibited by N10-(bromoacetyl)-5,8-dideazafolate. Its function is as follows. Catalyzes the transfer of a formyl group from 10-formyltetrahydrofolate to 5-phospho-ribosyl-glycinamide (GAR), producing 5-phospho-ribosyl-N-formylglycinamide (FGAR) and tetrahydrofolate. This Escherichia coli (strain K12) protein is Phosphoribosylglycinamide formyltransferase.